A 452-amino-acid chain; its full sequence is Phosphoglucosamine mutase (452 aa).

The active-site Phosphoserine intermediate is the Ser-103. Residues Ser-103, Asp-244, Asp-246, and Asp-248 each contribute to the Mg(2+) site. Ser-103 is modified (phosphoserine).

It belongs to the phosphohexose mutase family. Mg(2+) is required as a cofactor. Activated by phosphorylation.

The enzyme catalyses alpha-D-glucosamine 1-phosphate = D-glucosamine 6-phosphate. Its function is as follows. Catalyzes the conversion of glucosamine-6-phosphate to glucosamine-1-phosphate. The protein is Phosphoglucosamine mutase of Fusobacterium nucleatum subsp. nucleatum (strain ATCC 25586 / DSM 15643 / BCRC 10681 / CIP 101130 / JCM 8532 / KCTC 2640 / LMG 13131 / VPI 4355).